The chain runs to 266 residues: Interleukin-1 beta (266 aa).

The propeptide occupies 1 to 113 (MATVPEPINE…ETSSDEFLCD (113 aa)).

It belongs to the IL-1 family. As to quaternary structure, monomer. In its precursor form, weakly interacts with full-length MEFV; the mature cytokine does not interact at all. Interacts with integrins ITGAV:ITGBV and ITGA5:ITGB1; integrin-binding is required for IL1B signaling. Interacts with cargo receptor TMED10; the interaction is direct and is required for the secretion of IL1B mature form. Interacts with HSP90AB1; the interaction facilitates cargo translocation into the ERGIC. Interacts with HSP90B1; the interaction facilitates cargo translocation into the ERGIC.

It is found in the cytoplasm. It localises to the cytosol. The protein resides in the secreted. Its subcellular location is the lysosome. The protein localises to the extracellular exosome. Its function is as follows. Potent pro-inflammatory cytokine. Initially discovered as the major endogenous pyrogen, induces prostaglandin synthesis, neutrophil influx and activation, T-cell activation and cytokine production, B-cell activation and antibody production, and fibroblast proliferation and collagen production. Promotes Th17 differentiation of T-cells. Synergizes with IL12/interleukin-12 to induce IFNG synthesis from T-helper 1 (Th1) cells. Plays a role in angiogenesis by inducing VEGF production synergistically with TNF and IL6. Involved in transduction of inflammation downstream of pyroptosis: its mature form is specifically released in the extracellular milieu by passing through the gasdermin-D (GSDMD) pore. In Bubalus carabanensis (Swamp type water buffalo), this protein is Interleukin-1 beta (IL1B).